A 379-amino-acid chain; its full sequence is Deoxyhypusine synthase (379 aa).

Residues 104–108 (SNLVS), 130–132 (TAG), Glu136, and Asp237 each bind NAD(+). 135 to 136 (EE) is a binding site for spermidine. Asp242 lines the spermidine pocket. Gly293 is a binding site for NAD(+). His298 contacts spermidine. 318-319 (TA) is a binding site for NAD(+). Residues 324–326 (GSD) and 333–339 (EAVSWGK) each bind spermidine. Catalysis depends on Lys339, which acts as the Nucleophile. Position 352-353 (352-353 (DA)) interacts with NAD(+).

It belongs to the deoxyhypusine synthase family. In terms of assembly, homotetramer. NAD(+) is required as a cofactor.

It catalyses the reaction [eIF5A protein]-L-lysine + spermidine = [eIF5A protein]-deoxyhypusine + propane-1,3-diamine. It functions in the pathway protein modification; eIF5A hypusination. In terms of biological role, catalyzes the NAD-dependent oxidative cleavage of spermidine and the subsequent transfer of the butylamine moiety of spermidine to the epsilon-amino group of a specific lysine residue of the eIF-5A precursor protein to form the intermediate deoxyhypusine residue. Also able to produce homospermidine from putrescine. The sequence is that of Deoxyhypusine synthase (DHS1) from Nicotiana tabacum (Common tobacco).